The following is a 448-amino-acid chain: MSKITFPKDFIWGSATAAYQIEGAYNEDGKGESIWDRFSHTPGNIADGHTGDVACDHYHRYEEDIKIMKEIGIKSYRFSISWPRIFPEGTGKLNQKGLDFYKRLTNLLLENGIMPAITLYHWDLPQKLQDKGGWKNRDTTDYFTEYSEVIFKNLGDIVPIWFTHNEPGVVSLLGHFLGIHAPGIKDLRTSLEVSHNLLLSHGKAVKLFREMNIDAQIGIALNLSYHYPASEKAEDIEAAELSFSLAGRWYLDPVLKGRYPENALKLYKKKGIELSFPEDDLKLISQPIDFIAFNNYSSEFIKYDPSSESGFSPANSILEKFEKTDMGWIIYPEGLYDLLMLLDRDYGKPNIVISENGAAFKDEIGSNGKIEDTKRIQYLKDYLTQAHRAIQDGVNLKAYYLWSLLDNFEWAYGYNKRFGIVHVNFDTLERKIKDSGYWYKEVIKNNGF.

Catalysis depends on glutamate 166, which acts as the Proton donor. The Nucleophile role is filled by glutamate 355.

Belongs to the glycosyl hydrolase 1 family.

The enzyme catalyses Hydrolysis of terminal, non-reducing beta-D-glucosyl residues with release of beta-D-glucose.. It functions in the pathway glycan metabolism; cellulose degradation. This chain is Beta-glucosidase A (bglA), found in Acetivibrio thermocellus (strain ATCC 27405 / DSM 1237 / JCM 9322 / NBRC 103400 / NCIMB 10682 / NRRL B-4536 / VPI 7372) (Clostridium thermocellum).